We begin with the raw amino-acid sequence, 466 residues long: Putative proline/betaine transporter (466 aa).

12 helical membrane passes run 20–42 (VVAT…YTTA), 63–83 (FAAL…FGII), 91–111 (VVLT…GLLP), 116–136 (IGLW…FSTG), 164–184 (IGTL…TFFL), 191–211 (SFGW…GLYL), 247–267 (IFVC…VTAY), 285–305 (VLIT…GKLA), 313–332 (VFLI…FMLL), 337–354 (FVVI…LSTY), 377–397 (VTFN…ATWL), and 405–425 (LAPA…ITFL).

Belongs to the major facilitator superfamily. Metabolite:H+ Symporter (MHS) family (TC 2.A.1.6) family.

The protein localises to the cell membrane. Functionally, may be a proton symporter involved in the uptake of osmolytes such as proline and glycine betaine. The protein is Putative proline/betaine transporter (proP) of Staphylococcus aureus (strain Mu3 / ATCC 700698).